The sequence spans 394 residues: Cysteine desulfurase IscS (394 aa).

Residues 72–73 (GT), N152, Q180, and 200–202 (SAH) contribute to the pyridoxal 5'-phosphate site. The residue at position 203 (K203) is an N6-(pyridoxal phosphate)lysine. T238 contributes to the pyridoxal 5'-phosphate binding site. The Cysteine persulfide intermediate role is filled by C326. C326 is a binding site for [2Fe-2S] cluster.

It belongs to the class-V pyridoxal-phosphate-dependent aminotransferase family. NifS/IscS subfamily. Homodimer. Forms a heterotetramer with IscU, interacts with other sulfur acceptors. Requires pyridoxal 5'-phosphate as cofactor.

Its subcellular location is the cytoplasm. It catalyses the reaction (sulfur carrier)-H + L-cysteine = (sulfur carrier)-SH + L-alanine. Its pathway is cofactor biosynthesis; iron-sulfur cluster biosynthesis. In terms of biological role, master enzyme that delivers sulfur to a number of partners involved in Fe-S cluster assembly, tRNA modification or cofactor biosynthesis. Catalyzes the removal of elemental sulfur atoms from cysteine to produce alanine. Functions as a sulfur delivery protein for Fe-S cluster synthesis onto IscU, an Fe-S scaffold assembly protein, as well as other S acceptor proteins. The polypeptide is Cysteine desulfurase IscS (Dictyoglomus turgidum (strain DSM 6724 / Z-1310)).